A 1576-amino-acid chain; its full sequence is Protein Shroom (1576 aa).

Disordered regions lie at residues 1 to 31 (MKMR…ENNN), 46 to 100 (SNGA…TQAG), 112 to 142 (YDQT…DSTS), 187 to 244 (RQSH…SSTE), 267 to 434 (ISES…ISVT), 589 to 609 (VERQ…HSQS), and 621 to 660 (PNNL…SLLP). Residues 10 to 21 (GNGSEMGESTKS) are compositionally biased toward polar residues. Composition is skewed to low complexity over residues 46–69 (SNGA…AGSV), 76–91 (HNSS…GSSL), and 128–142 (SEGY…DSTS). Residues 189–211 (SHSHSHSHAHSHSNSHGHSHGHA) show a composition bias toward basic residues. Composition is skewed to low complexity over residues 212-244 (HSAS…SSTE) and 267-283 (ISES…SSRV). The span at 305–317 (DSSPTASNSSQMM) shows a compositional bias: polar residues. Over residues 376 to 388 (QSTLSTQSSLLEL) the composition is skewed to low complexity. The segment covering 399–415 (MGQSHSMGDLQQKNPHQ) has biased composition (polar residues). Ser404 carries the post-translational modification Phosphoserine. Positions 445–920 (APQPPAGKPS…LESNQQKRSN (476 aa)) are F-actin binding region required for planar polarity and cortical localization. Polar residues predominate over residues 633–643 (TGSNSASTRDC). Residues Ser667 and Ser668 each carry the phosphoserine modification. Disordered regions lie at residues 699 to 728 (ISFN…SSAT), 743 to 823 (AALA…NCFA), 849 to 876 (VPKK…HHAT), 910 to 939 (NLES…NTDP), 1036 to 1055 (GYGK…SQSY), 1091 to 1116 (PTAT…SHSD), and 1210 to 1244 (SFAN…DVHD). Basic residues predominate over residues 748-759 (QQHHPQQHRHAQ). The span at 798–816 (PLPPPPPPEVLQPRPPPSP) shows a compositional bias: pro residues. 2 stretches are compositionally biased toward polar residues: residues 910-923 (NLES…NSKA) and 1042-1055 (KPVT…SQSY). 2 stretches are compositionally biased toward pro residues: residues 1094–1108 (TPTP…PPRL) and 1217–1229 (MTPP…PPPL). The segment covering 1230–1239 (EPEEEEEQEE) has biased composition (acidic residues). The stretch at 1232–1296 (EEEEEQEEND…LEAAREEHQT (65 aa)) forms a coiled coil. Residues 1305–1572 (RQPIELDYEQ…QLSSLSDALV (268 aa)) enclose the ASD2 domain.

This sequence belongs to the shroom family. In terms of assembly, monomer or homodimer. Interacts with Rok. Binds (via N-terminus) to F-actin.

It is found in the cell junction. Its subcellular location is the adherens junction. The protein resides in the cytoplasm. The protein localises to the cytoskeleton. It localises to the apical cell membrane. Binds to Rho-kinase Rok and targets it to the apical cell cortex where it mediates apical constriction. During embryogenic axis elongation, required for the localization to adherens junctions and the establishment of planar polarization of both Rho-kinase Rok and myosin regulatory light chain sqh. May be involved in the assembly of microtubule arrays during cell elongation. The polypeptide is Protein Shroom (Drosophila melanogaster (Fruit fly)).